The sequence spans 290 residues: Agglutinin-2 (290 aa).

The first 35 residues, 1 to 35 (MAISNTNLLQTKKPISLPLLAFITLFLMLLNRVNS), serve as a signal peptide directing secretion. An N-linked (GlcNAc...) asparagine glycan is attached at asparagine 155. 2 residues coordinate Mn(2+): glutamate 165 and aspartate 167. Residues aspartate 167, asparagine 171, and aspartate 175 each contribute to the Ca(2+) site. Residues aspartate 175 and histidine 180 each coordinate Mn(2+). The N-linked (GlcNAc...) asparagine glycan is linked to asparagine 200.

Belongs to the leguminous lectin family. As to quaternary structure, homotetramer.

Functionally, mannose/glucose binding bark lectin. In terms of biological role, bark lectins are storage proteins that probably maintain stocks of nitrogen during dormant period. Self-aggregatable molecules that can bind their own carbohydrate side chains. They could also play a role in the plant's defense against phytophagous invertebrates or herbivorous higher animals. In Cladrastis kentukea (Yellow wood), this protein is Agglutinin-2.